Here is a 513-residue protein sequence, read N- to C-terminus: Histidine ammonia-lyase (513 aa).

Positions 145–147 (ASG) form a cross-link, 5-imidazolinone (Ala-Gly). Ser146 bears the 2,3-didehydroalanine (Ser) mark.

This sequence belongs to the PAL/histidase family. In terms of processing, contains an active site 4-methylidene-imidazol-5-one (MIO), which is formed autocatalytically by cyclization and dehydration of residues Ala-Ser-Gly.

It is found in the cytoplasm. The catalysed reaction is L-histidine = trans-urocanate + NH4(+). It functions in the pathway amino-acid degradation; L-histidine degradation into L-glutamate; N-formimidoyl-L-glutamate from L-histidine: step 1/3. This Vibrio vulnificus (strain YJ016) protein is Histidine ammonia-lyase.